The following is a 146-amino-acid chain: Protein MGF 100-3L (146 aa).

This sequence belongs to the asfivirus MGF 100 family.

Its function is as follows. Plays a role in virus cell tropism, and may be required for efficient virus replication in macrophages. This Ornithodoros (relapsing fever ticks) protein is Protein MGF 100-3L.